Here is an 852-residue protein sequence, read N- to C-terminus: Glutamine--tRNA ligase (852 aa).

A disordered region spans residues 1 to 42 (MGAFGWEQDRGAPFSGRSPRILTRMTDAPRPTAGADAPARPP). Residues 1–635 (MGAFGWEQDR…ITLKDTWGKQ (635 aa)) are glutaminyl-tRNA synthetase. Low complexity predominate over residues 28–38 (APRPTAGADAP). Positions 74–84 (PDPSGYAHLGH) match the 'HIGH' region motif. The L-glutamine site is built by D107 and Y252. The short motif at 308-312 (ITSKR) is the 'KMSKS' region element. Disordered stretches follow at residues 533-562 (EGEN…TAPV) and 632-681 (WGKQ…LTPE). A gatB-like region spans residues 636–852 (GGGTQQKAEG…LAAALKDALA (217 aa)). Positions 664–675 (SSSPAKAHAPKA) are enriched in low complexity.

In the N-terminal section; belongs to the class-I aminoacyl-tRNA synthetase family. This sequence in the C-terminal section; belongs to the GatB/GatE family. As to quaternary structure, monomer.

It localises to the cytoplasm. The enzyme catalyses tRNA(Gln) + L-glutamine + ATP = L-glutaminyl-tRNA(Gln) + AMP + diphosphate. The polypeptide is Glutamine--tRNA ligase (Deinococcus radiodurans (strain ATCC 13939 / DSM 20539 / JCM 16871 / CCUG 27074 / LMG 4051 / NBRC 15346 / NCIMB 9279 / VKM B-1422 / R1)).